The primary structure comprises 4753 residues: MVPEERRVGLSSDETSSDSLKSWHSICVLDSKEQPLACQQKQRQFVKPVTESEQPTVLELLLAELRTLFSAVLQDSSPAAWRYLHAVLGLLPPYRELLVGHLDLLPFLEQLYCWAPWVQTHLHLDLLGAIVQAFPPDSSLLDSASHADCCPQKRRLHHRPPCPACPFVQAQWSRQQVKEELATWLRPLTLPELQRCLGIVGAQVALEEAVWLDGLSLLPLALAADIPVRYESSDTDNAEVEPVGRKETRSQLDYEVPREKAFQKSSTGFSPETSFLDSQVMTALKMERYLKKIHFLYLNVAPSRYFRPYSLMVVPPDKVNPEHYIFSPFGILHVHPVEGSETMTLGTWHHHCVLWQQLQFIPFFKYCLLRKSFTCWKKNVRLQGLHRLQKFLENHLLLAVPHFGAGLLHISRLLQELHSVSWLPQELDRCYELLDLQTALAEEKHKALRLLHRCLNLCTSILRLVHEDTYHMQQCLQERVQNCDRIRTGQGSIYLQRVQHKQLEQKLKQAEAWWLQLGKFARLVDYMICQSLISVLEEQITSFVANILQAPRQKPFLSSQLVFDDHGQLSHVPCVENMIQTLTGGLQSVKTSALQVVQSADLKTSSDSLYSEEEDEEEDSKDEFLMPKFQGQPSDAVSIFCGPNVGLVWPWKSHPIAGILEVRGCRLRGQYFPHNYKQLEEDLDNNPKIQQALNIQQVLLEGVLCKVQEFCREHHWITGIYEFLQSWGPQKLEDMRGGPIKNYVTLVSRLNVWQARVSSMPIELLTKGGLLLLSCHDVQAEMESKLNSIRKDILAHVQNECWNLSQQLMTELTDFMHIFRTINSDIHAIAQCTQKLNEANEQYVELEERMEYVRALHELIRNHFSLFSAENEALDISVRRQFGESPIPPCPPPPQPHLLHCPLLAPQLLDMWEAFQFEKSQASEFLLSKRHAIMPKLQQLMAAALAELEGLLAKALSGPFMDPTQDQRSTEHQLVSLERQFQNTVSDLSELHHAYAIFTEDETPVPLPICGTRPIVQQQRIWHLYRVISENISEWKCMAFAKFSPAMAQEKTEGWLTEAARMSTTLELHSPVLQHCMRILGEFRSYLPLLTKLGSLHPQSLNCQCLLRALGLGSLQTIELLTLGQLLTYPLLEFADRINQVWQNENERIHAQETIRRLQRYWEARQLRLLNFILHVPYEPPASERSKRQVLRSPQWEVVDKDSGTFILSDYSNLQDSIQESLQVLSKILAIEKSGDLNKIALEWVAIMHGLGALLEVWLTFQQKWIFLNKVLHEMKIQFPNADLNSRFKVMDDQYRTLMRISVADPMVLSLVVPSAERSPYFQGQQLQQLLQAGSVELEGIIMSLESVLYGVCAHFPRLFFLSDSELVALLAARLESCEAQLWVRRCFPHVHAVSFRSCPTGEKNTDDWESSPNTQTQVEALAVLGAGGEEVKLQGPLPLHPDLPKWLASLEKCLRLALVHMLQGCVAARLARGPSLGEALKQLPKQNKLYLQLYVQHWIDLVQAFPWQCVLVAEEVVWRAEMEEALLEWGTLAMVSMHMRKLEVLVNFMRAQRASQGGQSLPSVRQTSLLSALLVMAVTHRDIAQLLEQHQVSDLTDFHWVRQLKYHLGSPHIIPKSPLQSLKTIASSEPSLSPAACWIDVLGRSFLYNYEYLGPRLGPLPSLLPERPALVLLLALEEVACGTVLGPNGVGKRAIVNSLAQALGRQLVMLPCSPQIEAQCLSNYLNGALQGGAWLLLEKVHQLPPGLLSALGQRLGELHHLYAPLYQEASRNTSTIDPTQPQLLGSSFFEKHHVSVRLGYGCLLVLRALSSAVPANLHLLLRPVALALPDLRQVAELTLLGAGMRDAFQMATRLSKFFSLERELVSGPLPCRLPLLKQILEDTIRTLNVTKEEPKCQKPRSLAAIEEAALLRSPLFSILNGLHLHNLRGLLCALFPSASQVLAEPMTYKLMKPLVVEELQQVGLDPSPDILGSLEQLSQALSRASGILLLGPAGSGKTTCWHSLFKIQNRLAAMEDTSTQGCQPVEITHLYPSGLSPQEFLGWLEGSCWHHGIFPKVLRAAGQCNNMGQKRQTEESIGIQHWIICDGASNGAWLDSITCLLSELPQLSLPSGQQIARPPGTFLLMEVADTTGISPTVVGCCALVWCGGEQTWQCILSALMASLPYEYRLQHRTVAELNHMAEVLVPATLRFLTCQGVSSLLQVHGQQAVCAGVAEVTSMARILHSLLDLHLRLKEEKAPGPEDLSYSDPVAQSFRSSKSSFLNRSQVDSDDVPDKCREHLLAVSSFLFALIWGFGAHLPSRFWPIFDTFIRDSISRLSNYPEPPPSALVFDLHVSPEDGTLVPFTGQYLSSHIKGTLGTFHPSIQTERLLYVVDLLLSGGQPVLLAGEAATGKSAFVEVLVEPHHPYIYSPIHPAFSSSHLRLLLSRGIQGQTQASPQPGHHQDSKPSLLFLLEDLHLATSDPEKSCQPVLETLRQAMDGTVYAHSTLELQTLQPTVNFLATVTVPGYCERPLCPRLFRLFTVLALESMTQATLLERHVPIIQAWLERFPSVERERALARGLVRASVEAWEAVCNCFMPSPLHPHYHFSLHSVSHLLSSLQLLPNRTGSRGFVDYPNHQEHLRRVSGLRGTCLTVMMATRNVVRLWLHEAQRTFCDRLDSPRERSYCAKLLLVVAQSVFCCGPGPQHLGKDHQESEEEEEEERVPEVESEGELAQWEDFSNSNSETEEEEEPYGLQVARVSNSRDPSLTPSIGPVSRGMKESISHKIRQEKGTRASNYRLQVRRSFKTWWQKKPQMDLISPLLLPVLLLHPQEKPSDLVFSQELILGPNSETPNLYLERQWEKLEEQLATSAAQLKLSPHLARCHSMAQHVARLVRVLARPRQHGLLLSGALGTGRHTAITLASSICQAHFFHLPSGSEEAILQCLRDASWHAGMLSQPVALLVPSGVDLTTLHRLLALATSGSFPGQYTEADLDRIGEHLPRENLGVKQNIKKEMVLQRFHQQVCSHLHLFFLIGDKQAHKQLPSTLFLRLLQLATASIDRYEPWDQAALAKVAQHHLEGAQSVPLDDGSWKYPDLQASIPSVAKAMALIHLSATHYHEHLCPALPLVTPKTFLDFLDTFLMLQQQTILKIKNKAQRVQNALENLRMLIKEHGTHANLIFDLEQQLKDSGKSLSMFQQQLEQSKLLYKQQLEECRHQENLIENLARQRDALQAQREAFLEQMSKAFLEPLSQLQVADFEEIRSYRAPPESVVRVTDAMCDLFHHETGWASAKQLLCTEDFYQELVFFPKEKITDSELIKLHLILKAPGMDDAALRAVSRPAASLAAWLWAVLHYGLAHCRGLPTDLLLQQVEATLTREQARLGYYQFQAQETLEHNLALAKMVEDAQASHNCVAKTLSQAQCGQYHKWPMKAALLTPMRAWTTQLQKLKGRCMTVFGDTLLCSAAIIYLGPFPPLRRQELLDEWLALCRGFQEALGPDDVAQALKRKQKSVSIPPKNPLLATHSPFSILSLLSSESEQYQWDGNLKPQAKSAHLAGLLLRSPTHYSSCRWPLLLDPSNEALIWLDPLPLEENRSFAPALTEGRGKGLMRNQKRESKTDMKEEDDESEESNEAEDQTKEQKAEERKNEQEKEQEENEEKEEEKTESQGSKPAYETQLPSLPYLSVLSGADPELGSQLQEAAACGLPVLLTNVELGLGCEELQWLLQREQLSPPQVQPGFCLYLSTTLSLCAMEKVLGCELLKGLNVLDLGLNMEILEEQMLHEILCREYPELETRWQDLKIRALDTCKAVEAAEERLLTMLLFQNPKRQKPAKFLRNIVRAQGKLCQLRAHCEELEGQKLQEMVLWAPYRPVVWHGMAMVKALSQLQNLLPLFCMSPENWLAVTKQALDSMKPREINHGEDLASHLLQLRAHLTRQLLGSTVTALGLTQVPLVGALGALALLQATGKASELERLALWPGLAASPSTVHSKPVSDVARPAWLGPKAWHECEMLELLPPFVGLCASLAGHSSAWQAYLSLSSTVLGPAPGPGPEPLSLLQKLILWRVLRPECLAGALADFTTSLLGRPLDENTYAPTMPFKHSQATQPMLILLPPPGHPSATLHPLTVIQKLAAKYQQGQKQLQVIALGSEAWDPVSVVVSTLSQAMYEGHWLVLDNCHLMPHWPKELLQLLLELLGRAKVVADLESEQLLDQPESRNVSTVHRDFRLWLIVPAESSASLPAVLTQHSMPVFWNQSLELGHVLIDSVELAQQVLYMQPPTQALPLLLLHGLLLHRQLYGTRLQAHRGRWSQVTLTQVLQTQDQLWASLSNPRAAMQELAASVFYGGPLGDTEDREALISLTQACLSPSSGSWVQPHTPQSLLATLMPLPELRELDAMAECKAQMHLLPSPPEPRLCGLSEGPQAWLLRRQSRALLSALQRSSPVWVPESRRGAQLAERRLRQRLVQVNRRLESLQDLLTHVIRQDESDAPWSVLGPNARRPLEGVLETEALELSQLVGTLQRDLDCLLQQLKGAPPCPSRRCAAVAHALWTGRLPLPWRPHAPAGPQPPWHWLRQLSRRGQLLVRYLGVGADASSDVPERVFHLSAFRHPRRLLLALRGEAALDQNVPSSNFPGSRGSVSSQLQYKRLEMNSNPLHFRVENGPNPTVPERGLLLIGLQVLHAEWDPIAGALQDSPSSQPSPLPPVSISTQAPGTSDLPAPADLTVYSCPVYMGGPLGTAKLQSRNIVMHLPLPTKLTPNTCVQRRVHVCSPPLS.

2 coiled-coil regions span residues 826–858 and 936–991; these read IHAI…ALHE and KLQQ…LSEL. A disordered region spans residues 2688-2766; it reads HLGKDHQESE…SRGMKESISH (79 aa). The segment covering 2695–2712 has biased composition (acidic residues); that stretch reads ESEEEEEEERVPEVESEG. Residues 2740–2751 show a composition bias toward polar residues; the sequence is RVSNSRDPSLTP. Coiled-coil stretches lie at residues 3125–3227, 3590–3651, and 4431–4460; these read LQQQ…MSKA, MRNQ…QGSK, and GAQL…LTHV. A disordered region spans residues 3580 to 3657; that stretch reads ALTEGRGKGL…QGSKPAYETQ (78 aa). Positions 3602-3615 are enriched in acidic residues; it reads KEEDDESEESNEAE. The segment covering 3616-3631 has biased composition (basic and acidic residues); sequence DQTKEQKAEERKNEQE. Residues 3632–3641 are compositionally biased toward acidic residues; that stretch reads KEQEENEEKE. The segment at 4669–4697 is disordered; it reads ALQDSPSSQPSPLPPVSISTQAPGTSDLP.

Belongs to the dynein heavy chain family. As to expression, expressed in spermatozoa (at protein level).

It is found in the cell projection. It localises to the cilium. The protein resides in the flagellum. Its function is as follows. Essential for the normal assembly and function of sperm flagella axonemes. This is Dynein heavy chain domain-containing protein 1 (DNHD1) from Homo sapiens (Human).